The following is a 414-amino-acid chain: Probable cell wall biosynthesis protein LcpB (414 aa).

The interval 1–108 (MDSPGQGEIA…PPVIAGDGGR (108 aa)) is disordered. The Cytoplasmic portion of the chain corresponds to 1–120 (MDSPGQGEIA…KAISFKPRGC (120 aa)). Basic and acidic residues predominate over residues 9 to 23 (IARDSQGRPILDRYG). Residues 33 to 42 (RQTPPTPRTP) show a composition bias toward pro residues. Residues 43-53 (PVNETRVYQPR) are compositionally biased toward low complexity. Positions 54-80 (QTPPRQTPPRQTPPRQMPPRQTPPRQV) are enriched in pro residues. A helical transmembrane segment spans residues 121 to 141 (LGTIAGVLAVGLVLVFVVTLW). Residues 142 to 414 (ADSKLNRVDA…GAEALFSSMR (273 aa)) lie on the Periplasmic side of the membrane.

This sequence belongs to the LytR/CpsA/Psr (LCP) family.

It localises to the cell inner membrane. The polypeptide is Probable cell wall biosynthesis protein LcpB (Corynebacterium glutamicum (strain ATCC 13032 / DSM 20300 / JCM 1318 / BCRC 11384 / CCUG 27702 / LMG 3730 / NBRC 12168 / NCIMB 10025 / NRRL B-2784 / 534)).